Reading from the N-terminus, the 185-residue chain is Large ribosomal subunit protein bL25 (185 aa).

Belongs to the bacterial ribosomal protein bL25 family. CTC subfamily. In terms of assembly, part of the 50S ribosomal subunit; part of the 5S rRNA/L5/L18/L25 subcomplex. Contacts the 5S rRNA. Binds to the 5S rRNA independently of L5 and L18.

In terms of biological role, this is one of the proteins that binds to the 5S RNA in the ribosome where it forms part of the central protuberance. This is Large ribosomal subunit protein bL25 from Laribacter hongkongensis (strain HLHK9).